A 225-amino-acid polypeptide reads, in one-letter code: Endonuclease V (225 aa).

Mg(2+) is bound by residues D43 and D110. Interaction with target DNA regions lie at residues 139-141 and 214-221; these read KSR and HIYTQRLK.

This sequence belongs to the endonuclease V family. Requires Mg(2+) as cofactor.

Its subcellular location is the cytoplasm. The enzyme catalyses Endonucleolytic cleavage at apurinic or apyrimidinic sites to products with a 5'-phosphate.. DNA repair enzyme involved in the repair of deaminated bases. Selectively cleaves double-stranded DNA at the second phosphodiester bond 3' to a deoxyinosine leaving behind the intact lesion on the nicked DNA. In vitro, can also cleave single-stranded substrates with inosine, double-stranded DNA with apurinic sites, or DNA sites with uracil or a mismatched base. When present in molar excess, two protein molecules can bind to the same DNA substrate and effect cleavage of both strands (in vitro). The protein is Endonuclease V of Thermotoga maritima (strain ATCC 43589 / DSM 3109 / JCM 10099 / NBRC 100826 / MSB8).